Reading from the N-terminus, the 590-residue chain is Myo-inositol transporter 3A (590 aa).

Topologically, residues 1–57 (MSATHIENRDDSFLENKGIDHIGRPENNNGSQEPPSPSGFGGHLIDENLVRVEGEDK) are cytoplasmic. Residues 15–24 (ENKGIDHIGR) are compositionally biased toward basic and acidic residues. Residues 15–40 (ENKGIDHIGRPENNNGSQEPPSPSGF) are disordered. Residues 58–78 (VTWYLCFLISASAIAGFLFGY) form a helical membrane-spanning segment. Topologically, residues 79–105 (DTGVVGVALPLVGTDLGGSALNSSQQE) are extracellular. Asn-100 is a glycosylation site (N-linked (GlcNAc...) asparagine). A helical membrane pass occupies residues 106-126 (IITAGTTIGAIFGSAILGGWG). At 127–132 (DRLGRK) the chain is on the cytoplasmic side. The chain crosses the membrane as a helical span at residues 133–153 (GAILVSDVFFTIGAVIIASSY). The Extracellular portion of the chain corresponds to 154-157 (SVPQ). A helical transmembrane segment spans residues 158–178 (IIVGRIILGIGVGGAAVIAPL). Topologically, residues 179 to 192 (FITETAPTAVRGRC) are cytoplasmic. A helical transmembrane segment spans residues 193–213 (IGVNAFFIPFGQVVSDAIGAG). Topologically, residues 214-222 (VQNMHNGWR) are extracellular. Residues 223–243 (LLFALGAVPSLLQLLLFHYLP) traverse the membrane as a helical segment. At 244–325 (ESPRILILKG…AVSALQAAGQ (82 aa)) the chain is on the cytoplasmic side. A helical membrane pass occupies residues 326–346 (LTGFNTLLYYAGTLFGLLGLS). Topologically, residues 347–349 (NPA) are extracellular. A helical membrane pass occupies residues 350–370 (LGGLIPAGTNAVFVLIGMSLV). Residues 371 to 376 (DKVGRR) lie on the Cytoplasmic side of the membrane. Residues 377–397 (GLLLIGVPIMLLGHVWNIVSF) form a helical membrane-spanning segment. The Extracellular portion of the chain corresponds to 398 to 420 (YYMCKPTGGFLDTSYSYDTTDVG). The chain crosses the membrane as a helical span at residues 421-441 (IVIGGIVFFVVGYGLTYSHLV). At 442–455 (WYQAEYLTLEVRSM) the chain is on the cytoplasmic side. The helical transmembrane segment at 456-476 (GSGIATTVCWIANLVVSVSYL) threads the bilayer. At 477–485 (SELETMTPS) the chain is on the extracellular side. The chain crosses the membrane as a helical span at residues 486–506 (GTYGFYFGISVIGFVFLVFCL). Over 507–590 (PETKQLSIDE…GGKRTPSASV (84 aa)) the chain is Cytoplasmic.

This sequence belongs to the major facilitator superfamily. Sugar transporter (TC 2.A.1.1) family.

The protein resides in the cell membrane. The enzyme catalyses myo-inositol(out) + H(+)(out) = myo-inositol(in) + H(+)(in). Functionally, transporter for myo-inositol. The protein is Myo-inositol transporter 3A (ITR3A) of Cryptococcus neoformans var. grubii serotype A (strain H99 / ATCC 208821 / CBS 10515 / FGSC 9487) (Filobasidiella neoformans var. grubii).